The sequence spans 194 residues: ATP-dependent Clp protease proteolytic subunit 3 (194 aa).

Residue Ser-96 is the Nucleophile of the active site. His-121 is a catalytic residue.

This sequence belongs to the peptidase S14 family. In terms of assembly, fourteen ClpP subunits assemble into 2 heptameric rings which stack back to back to give a disk-like structure with a central cavity, resembling the structure of eukaryotic proteasomes.

Its subcellular location is the cytoplasm. The catalysed reaction is Hydrolysis of proteins to small peptides in the presence of ATP and magnesium. alpha-casein is the usual test substrate. In the absence of ATP, only oligopeptides shorter than five residues are hydrolyzed (such as succinyl-Leu-Tyr-|-NHMec, and Leu-Tyr-Leu-|-Tyr-Trp, in which cleavage of the -Tyr-|-Leu- and -Tyr-|-Trp bonds also occurs).. Functionally, cleaves peptides in various proteins in a process that requires ATP hydrolysis. Has a chymotrypsin-like activity. Plays a major role in the degradation of misfolded proteins. The chain is ATP-dependent Clp protease proteolytic subunit 3 from Rhizobium etli (strain ATCC 51251 / DSM 11541 / JCM 21823 / NBRC 15573 / CFN 42).